The following is a 565-amino-acid chain: NAD-dependent malic enzyme (565 aa).

Y104 acts as the Proton donor in catalysis. R157 is a binding site for NAD(+). The active-site Proton acceptor is the K175. E246, D247, and D270 together coordinate a divalent metal cation. Residues D270 and N418 each contribute to the NAD(+) site.

It belongs to the malic enzymes family. Homotetramer. The cofactor is Mg(2+). Mn(2+) serves as cofactor.

The enzyme catalyses (S)-malate + NAD(+) = pyruvate + CO2 + NADH. It carries out the reaction oxaloacetate + H(+) = pyruvate + CO2. The sequence is that of NAD-dependent malic enzyme from Escherichia coli O139:H28 (strain E24377A / ETEC).